Reading from the N-terminus, the 353-residue chain is Photosystem II D2 protein (353 aa).

T2 is modified (N-acetylthreonine). T2 is subject to Phosphothreonine. The helical transmembrane segment at 41-61 (CAYFAVGGWFTGTTFVTSWYT) threads the bilayer. Residue H118 participates in chlorophyll a binding. A helical transmembrane segment spans residues 125–141 (GFMLRQFELARSVQLRP). Q130 and N143 together coordinate pheophytin a. Residues 153–166 (VFVSVFLIYPLGQS) form a helical membrane-spanning segment. Residue H198 coordinates chlorophyll a. Residues 208-228 (AALLCAIHGATVENTLFEDGD) form a helical membrane-spanning segment. A plastoquinone is bound by residues H215 and F262. H215 is a Fe cation binding site. Fe cation is bound at residue H269. A helical membrane pass occupies residues 279–295 (GLWMSALGVVGLALNLR).

Belongs to the reaction center PufL/M/PsbA/D family. As to quaternary structure, PSII is composed of 1 copy each of membrane proteins PsbA, PsbB, PsbC, PsbD, PsbE, PsbF, PsbH, PsbI, PsbJ, PsbK, PsbL, PsbM, PsbT, PsbX, PsbY, PsbZ, Psb30/Ycf12, at least 3 peripheral proteins of the oxygen-evolving complex and a large number of cofactors. It forms dimeric complexes. Requires The D1/D2 heterodimer binds P680, chlorophylls that are the primary electron donor of PSII, and subsequent electron acceptors. It shares a non-heme iron and each subunit binds pheophytin, quinone, additional chlorophylls, carotenoids and lipids. There is also a Cl(-1) ion associated with D1 and D2, which is required for oxygen evolution. The PSII complex binds additional chlorophylls, carotenoids and specific lipids. as cofactor.

It localises to the plastid. The protein localises to the chloroplast thylakoid membrane. It catalyses the reaction 2 a plastoquinone + 4 hnu + 2 H2O = 2 a plastoquinol + O2. In terms of biological role, photosystem II (PSII) is a light-driven water:plastoquinone oxidoreductase that uses light energy to abstract electrons from H(2)O, generating O(2) and a proton gradient subsequently used for ATP formation. It consists of a core antenna complex that captures photons, and an electron transfer chain that converts photonic excitation into a charge separation. The D1/D2 (PsbA/PsbD) reaction center heterodimer binds P680, the primary electron donor of PSII as well as several subsequent electron acceptors. D2 is needed for assembly of a stable PSII complex. In Solanum bulbocastanum (Wild potato), this protein is Photosystem II D2 protein.